Reading from the N-terminus, the 182-residue chain is Lipoprotein signal peptidase (182 aa).

4 helical membrane passes run 15-35 (LYIG…FLVI), 44-64 (LEVL…FVFG), 65-85 (AFQD…VFLI), and 97-117 (PWGW…KFFV). Catalysis depends on residues aspartate 140 and aspartate 162. Residues 155–175 (WPAFNVADSCVTIGLTILIFT) form a helical membrane-spanning segment.

Belongs to the peptidase A8 family.

The protein localises to the cell inner membrane. It catalyses the reaction Release of signal peptides from bacterial membrane prolipoproteins. Hydrolyzes -Xaa-Yaa-Zaa-|-(S,diacylglyceryl)Cys-, in which Xaa is hydrophobic (preferably Leu), and Yaa (Ala or Ser) and Zaa (Gly or Ala) have small, neutral side chains.. It functions in the pathway protein modification; lipoprotein biosynthesis (signal peptide cleavage). Functionally, this protein specifically catalyzes the removal of signal peptides from prolipoproteins. This Leptospira borgpetersenii serovar Hardjo-bovis (strain L550) protein is Lipoprotein signal peptidase.